A 670-amino-acid polypeptide reads, in one-letter code: DNA ligase (670 aa).

Residues 34 to 38, 83 to 84, and Glu-113 contribute to the NAD(+) site; these read DFEFD and SL. The active-site N6-AMP-lysine intermediate is the Lys-115. Positions 136, 173, 288, and 312 each coordinate NAD(+). Residues Cys-406, Cys-409, Cys-424, and Cys-430 each contribute to the Zn(2+) site. Residues 591 to 670 enclose the BRCT domain; the sequence is PESDKFAGKS…EAEFISLLNS (80 aa).

The protein belongs to the NAD-dependent DNA ligase family. LigA subfamily. Requires Mg(2+) as cofactor. Mn(2+) serves as cofactor.

It catalyses the reaction NAD(+) + (deoxyribonucleotide)n-3'-hydroxyl + 5'-phospho-(deoxyribonucleotide)m = (deoxyribonucleotide)n+m + AMP + beta-nicotinamide D-nucleotide.. Functionally, DNA ligase that catalyzes the formation of phosphodiester linkages between 5'-phosphoryl and 3'-hydroxyl groups in double-stranded DNA using NAD as a coenzyme and as the energy source for the reaction. It is essential for DNA replication and repair of damaged DNA. This Cytophaga hutchinsonii (strain ATCC 33406 / DSM 1761 / CIP 103989 / NBRC 15051 / NCIMB 9469 / D465) protein is DNA ligase.